Consider the following 182-residue polypeptide: MFKWYVVQVFTAQEKKVKKSLEDFKEASGMSDFIQQIILPSENVMEVKKGEHKIVEKYIWPGYLLVKMHLTDESWSYVKKTQGVVEFLGGGAPVALSEEEVKNILADLEEKKSGVVQKHKFEVGSQVKINDGVFVNFVGVVSEVFHDKGRLSVMVSIFGRETRVDDLEFWQVEEVVPGQESE.

The protein belongs to the NusG family.

In terms of biological role, participates in transcription elongation, termination and antitermination. The chain is Transcription termination/antitermination protein NusG from Chlamydia trachomatis serovar D (strain ATCC VR-885 / DSM 19411 / UW-3/Cx).